We begin with the raw amino-acid sequence, 306 residues long: Non-specific ribonucleoside hydrolase RihC (306 aa).

Residue H235 is part of the active site.

This sequence belongs to the IUNH family. RihC subfamily.

Functionally, hydrolyzes both purine and pyrimidine ribonucleosides with a broad-substrate specificity. In Salmonella dublin (strain CT_02021853), this protein is Non-specific ribonucleoside hydrolase RihC.